A 491-amino-acid polypeptide reads, in one-letter code: Ketol-acid reductoisomerase (NADP(+)) (491 aa).

Positions 15-208 (AQLGKCRFMG…GGHRAGVLES (194 aa)) constitute a KARI N-terminal Rossmann domain. Residues 45 to 48 (CGAQ), Arg-68, Arg-76, Ser-78, and 108 to 110 (DKQ) each bind NADP(+). The active site involves His-132. Position 158 (Gly-158) interacts with NADP(+). KARI C-terminal knotted domains lie at 209–344 (SFVA…TAPQ) and 345–484 (YEGK…MTDM). Asp-217, Glu-221, Glu-389, and Glu-393 together coordinate Mg(2+). Ser-414 contacts substrate.

Belongs to the ketol-acid reductoisomerase family. Mg(2+) is required as a cofactor.

It catalyses the reaction (2R)-2,3-dihydroxy-3-methylbutanoate + NADP(+) = (2S)-2-acetolactate + NADPH + H(+). The catalysed reaction is (2R,3R)-2,3-dihydroxy-3-methylpentanoate + NADP(+) = (S)-2-ethyl-2-hydroxy-3-oxobutanoate + NADPH + H(+). It participates in amino-acid biosynthesis; L-isoleucine biosynthesis; L-isoleucine from 2-oxobutanoate: step 2/4. It functions in the pathway amino-acid biosynthesis; L-valine biosynthesis; L-valine from pyruvate: step 2/4. In terms of biological role, involved in the biosynthesis of branched-chain amino acids (BCAA). Catalyzes an alkyl-migration followed by a ketol-acid reduction of (S)-2-acetolactate (S2AL) to yield (R)-2,3-dihydroxy-isovalerate. In the isomerase reaction, S2AL is rearranged via a Mg-dependent methyl migration to produce 3-hydroxy-3-methyl-2-ketobutyrate (HMKB). In the reductase reaction, this 2-ketoacid undergoes a metal-dependent reduction by NADPH to yield (R)-2,3-dihydroxy-isovalerate. The sequence is that of Ketol-acid reductoisomerase (NADP(+)) from Escherichia coli (strain UTI89 / UPEC).